The chain runs to 489 residues: MSNDNDTLVTADVRNGIDGHALADRIGLDEAEIAWRLSFTGIDDDTMAALAAEQPLFEATADALVTDFYDHLESYERTQDLFANSTKTVEQLKETQAEYLLGLGRGEYDTEYAAQRARIGKIHDVLGLGPDVYLGAYTRYYTGLLDALADDVVADRGEEAAAAVDELVARFLPMLKLLTFDQQIAMDTYIDSYAQRLHDEIDSRQELANAVASDVEAPLSSLEATSQDVAERTDTMRAATDDQVDRMADVSREISSVSASVEEVASTADDVRRTSEDAEALAQQGEAAADDALATMTDIDEATDGVTAGVEQLRERAADVESVTGVIDDIAEQTNMLALNASIEAARAGEAGEGFAVVADEVKALAEESREQSTRVEELVEQMQAETEETVDQLDEVNQRIGEGVERVEEAMETLQEITDAVEDAASGMQEVSTATDEQAVSTEEVAEMVDDVDDRAGEIAAALDDIADATDQQVRTVEEVRETVGKLS.

The 237-residue stretch at 218–454 (PLSSLEATSQ…EVAEMVDDVD (237 aa)) folds into the Methyl-accepting transducer domain.

This sequence belongs to the methyl-accepting chemotaxis (MCP) protein family. In terms of assembly, homotetramer.

Its function is as follows. Heme-containing signal transducer responsible for aerotaxis, the migratory response toward or away from oxygen. This is Heme-based aerotactic transducer HemAT (hemAT) from Halobacterium salinarum (strain ATCC 700922 / JCM 11081 / NRC-1) (Halobacterium halobium).